A 268-amino-acid polypeptide reads, in one-letter code: UPF0294 protein ETA_26410 (268 aa).

Belongs to the UPF0294 family.

Its subcellular location is the cytoplasm. The protein is UPF0294 protein ETA_26410 of Erwinia tasmaniensis (strain DSM 17950 / CFBP 7177 / CIP 109463 / NCPPB 4357 / Et1/99).